Here is a 106-residue protein sequence, read N- to C-terminus: Tripartite terminase subunit 2 (106 aa).

It belongs to the herpesviridae TRM2 protein family. Associates with TRM1 and TRM3 to form the tripartite terminase complex.

Its subcellular location is the host nucleus. In terms of biological role, component of the molecular motor that translocates viral genomic DNA in empty capsid during DNA packaging. Forms a tripartite terminase complex together with TRM1 and TRM3 in the host cytoplasm. Once the complex reaches the host nucleus, it interacts with the capsid portal vertex. This portal forms a ring in which genomic DNA is translocated into the capsid. This chain is Tripartite terminase subunit 2, found in Human herpesvirus 6A (strain Uganda-1102) (HHV-6 variant A).